The primary structure comprises 359 residues: Outer membrane protein assembly factor BamC (359 aa).

Positions 1 to 21 (MSTLNKYKTLIIISSLAAVSS) are cleaved as a signal peptide. Cys-22 carries the N-palmitoyl cysteine lipid modification. Cys-22 carries S-diacylglycerol cysteine lipidation.

The protein belongs to the BamC family. In terms of assembly, part of the Bam complex.

The protein resides in the cell outer membrane. Functionally, part of the outer membrane protein assembly complex, which is involved in assembly and insertion of beta-barrel proteins into the outer membrane. The chain is Outer membrane protein assembly factor BamC from Kangiella koreensis (strain DSM 16069 / JCM 12317 / KCTC 12182 / SW-125).